A 125-amino-acid chain; its full sequence is Large ribosomal subunit protein eL31 (125 aa).

Residue M1 is modified to N-acetylmethionine. Phosphoserine is present on S15. N6-succinyllysine occurs at positions 55 and 70. K75 is modified (N6-acetyllysine; alternate). K75 is modified (N6-succinyllysine; alternate). At S98 the chain carries Phosphoserine.

The protein belongs to the eukaryotic ribosomal protein eL31 family. Component of the large ribosomal subunit.

The protein resides in the cytoplasm. Component of the large ribosomal subunit. The ribosome is a large ribonucleoprotein complex responsible for the synthesis of proteins in the cell. The polypeptide is Large ribosomal subunit protein eL31 (RPL31) (Pongo abelii (Sumatran orangutan)).